Here is a 371-residue protein sequence, read N- to C-terminus: Flagellar P-ring protein (371 aa).

Residues 1–25 (MTMRVCKWLLTFALLFAATLTPAHS) form the signal peptide.

This sequence belongs to the FlgI family. The basal body constitutes a major portion of the flagellar organelle and consists of four rings (L,P,S, and M) mounted on a central rod.

Its subcellular location is the periplasm. It is found in the bacterial flagellum basal body. In terms of biological role, assembles around the rod to form the L-ring and probably protects the motor/basal body from shearing forces during rotation. The sequence is that of Flagellar P-ring protein from Sinorhizobium fredii (strain NBRC 101917 / NGR234).